The sequence spans 389 residues: Urotensin-2 receptor (389 aa).

A compositionally biased stretch (polar residues) spans 1–10 (MALTPESPSS). The disordered stretch occupies residues 1–39 (MALTPESPSSFPGLAATGSSVPEPPGGPNATLNSSWASP). The Extracellular portion of the chain corresponds to 1-54 (MALTPESPSSFPGLAATGSSVPEPPGGPNATLNSSWASPTEPSSLEDLVATGTI). Residues Asn29 and Asn33 are each glycosylated (N-linked (GlcNAc...) asparagine). A compositionally biased stretch (polar residues) spans 30 to 39 (ATLNSSWASP). A helical transmembrane segment spans residues 55–77 (GTLLSAMGVVGVVGNAYTLVVTC). Residues 78–87 (RSLRAVASMY) lie on the Cytoplasmic side of the membrane. Residues 88–113 (VYVVNLALADLLYLLSIPFIVATYVT) traverse the membrane as a helical segment. Residues 114–124 (KEWHFGDVGCR) are Extracellular-facing. Cys123 and Cys199 are joined by a disulfide. The chain crosses the membrane as a helical span at residues 125-146 (VLFGLDFLTMHASIFTLTVMSS). The Cytoplasmic segment spans residues 147-167 (ERYAAVLRPLDTVQRPKGYRK). The chain crosses the membrane as a helical span at residues 168–186 (LLALGTWLLALLLTLPVML). At 187-209 (AMRLVRRGPKSLCLPAWGPRAHR) the chain is on the extracellular side. The helical transmembrane segment at 210–232 (AYLTLLFATSIAGPGLLIGLLYA) threads the bilayer. The Cytoplasmic segment spans residues 233 to 258 (RLARAYRRSQRASFKRARRPGARALR). A helical transmembrane segment spans residues 259 to 284 (LVLGIVLLFWACFLPFWLWQLLAQYH). The Extracellular segment spans residues 285–297 (QAPLAPRTARIVN). A helical transmembrane segment spans residues 298–318 (YLTTCLTYGNSCANPFLYTLL). Over 319–389 (TRNYRDHLRG…PAPEGPRAPA (71 aa)) the chain is Cytoplasmic. Positions 328 to 389 (GRVRGPGSGG…PAPEGPRAPA (62 aa)) are disordered. A compositionally biased stretch (gly residues) spans 331–340 (RGPGSGGGRG). Residues 355–368 (SGRSLSSCSPQPTD) show a composition bias toward polar residues. Over residues 377-389 (PARPAPEGPRAPA) the composition is skewed to pro residues.

It belongs to the G-protein coupled receptor 1 family. In terms of tissue distribution, most abundant expression in the heart and pancreas.

It is found in the cell membrane. In terms of biological role, high affinity receptor for urotensin-2 and urotensin-2B. The activity of this receptor is mediated by a G-protein that activate a phosphatidylinositol-calcium second messenger system. This chain is Urotensin-2 receptor (UTS2R), found in Homo sapiens (Human).